Consider the following 347-residue polypeptide: Dual specificity mitogen-activated protein kinase kinase 3 (347 aa).

Met-1 carries the post-translational modification N-acetylmethionine. A compositionally biased stretch (low complexity) spans 1-15 (MESPASSQPASMPQS). The segment at 1–46 (MESPASSQPASMPQSKGKSKRKKDLRISCMSKPPAPNPTPPRNLDS) is disordered. Residues Ser-3 and Ser-15 each carry the phosphoserine modification. The Protein kinase domain occupies 64–325 (LVTISELGRG…YLELMEHPFF (262 aa)). ATP-binding positions include 70–78 (LGRGAYGVV) and Lys-93. Asp-190 functions as the Proton acceptor in the catalytic mechanism. The residue at position 218 (Ser-218) is a Phosphoserine. At Thr-222 the chain carries Phosphothreonine.

This sequence belongs to the protein kinase superfamily. STE Ser/Thr protein kinase family. MAP kinase kinase subfamily. As to quaternary structure, component of a signaling complex containing at least AKAP13, PKN1, MAPK14, ZAK and MAP2K3. Within this complex, AKAP13 interacts directly with PKN1, which in turn recruits MAPK14, MAP2K3 and ZAK. Binds to DYRK1B/MIRK and increases its kinase activity. Part of a complex with MAP3K3, RAC1 and CCM2. Interacts with ARRB1. (Microbial infection) Interacts with Yersinia YopJ. Post-translationally, autophosphorylated. Phosphorylation on Ser-218 and Thr-222 by MAP kinase kinase kinases positively regulates the kinase activity. Phosphorylated by TAOK2. (Microbial infection) Yersinia YopJ may acetylate Ser/Thr residues, preventing phosphorylation and activation, thus blocking the MAPK signaling pathway. As to expression, abundant expression is seen in the skeletal muscle. It is also widely expressed in other tissues.

The catalysed reaction is L-seryl-[protein] + ATP = O-phospho-L-seryl-[protein] + ADP + H(+). It catalyses the reaction L-threonyl-[protein] + ATP = O-phospho-L-threonyl-[protein] + ADP + H(+). The enzyme catalyses L-tyrosyl-[protein] + ATP = O-phospho-L-tyrosyl-[protein] + ADP + H(+). With respect to regulation, activated by dual phosphorylation on Ser-218 and Thr-222. Functionally, dual specificity kinase. Is activated by cytokines and environmental stress in vivo. Catalyzes the concomitant phosphorylation of a threonine and a tyrosine residue in the MAP kinase p38. Part of a signaling cascade that begins with the activation of the adrenergic receptor ADRA1B and leads to the activation of MAPK14. This chain is Dual specificity mitogen-activated protein kinase kinase 3 (MAP2K3), found in Homo sapiens (Human).